Reading from the N-terminus, the 352-residue chain is Ion-translocating oxidoreductase complex subunit D (352 aa).

Helical transmembrane passes span 20–40 (IMLL…WFFG), 42–62 (GTLV…ALVL), 78–109 (ALLT…VIIA), 123–143 (PAMI…TSWL), and 148–168 (IAVN…GHIT). Thr-187 carries the post-translational modification FMN phosphoryl threonine. The next 5 helical transmembrane spans lie at 215–235 (LAGV…VWLL), 242–262 (WHIP…GWLF), 267–287 (LAAP…FFIL), 301–321 (LIFG…GGYP), and 322–342 (DGVA…DYYT).

The protein belongs to the NqrB/RnfD family. In terms of assembly, the complex is composed of six subunits: RsxA, RsxB, RsxC, RsxD, RsxE and RsxG. Requires FMN as cofactor.

The protein resides in the cell inner membrane. Part of a membrane-bound complex that couples electron transfer with translocation of ions across the membrane. Required to maintain the reduced state of SoxR. The chain is Ion-translocating oxidoreductase complex subunit D from Escherichia coli (strain SMS-3-5 / SECEC).